The chain runs to 932 residues: Isoleucine--tRNA ligase (932 aa).

The short motif at 57 to 67 is the 'HIGH' region element; the sequence is PYANGDIHIGT. Glu559 is an L-isoleucyl-5'-AMP binding site. A 'KMSKS' region motif is present at residues 600-604; that stretch reads KMSKS. An ATP-binding site is contributed by Lys603. 4 residues coordinate Zn(2+): Cys899, Cys902, Cys919, and Cys922.

Belongs to the class-I aminoacyl-tRNA synthetase family. IleS type 1 subfamily. As to quaternary structure, monomer. The cofactor is Zn(2+).

The protein resides in the cytoplasm. The enzyme catalyses tRNA(Ile) + L-isoleucine + ATP = L-isoleucyl-tRNA(Ile) + AMP + diphosphate. Its function is as follows. Catalyzes the attachment of isoleucine to tRNA(Ile). As IleRS can inadvertently accommodate and process structurally similar amino acids such as valine, to avoid such errors it has two additional distinct tRNA(Ile)-dependent editing activities. One activity is designated as 'pretransfer' editing and involves the hydrolysis of activated Val-AMP. The other activity is designated 'posttransfer' editing and involves deacylation of mischarged Val-tRNA(Ile). The chain is Isoleucine--tRNA ligase from Caldanaerobacter subterraneus subsp. tengcongensis (strain DSM 15242 / JCM 11007 / NBRC 100824 / MB4) (Thermoanaerobacter tengcongensis).